The following is a 163-amino-acid chain: MARLTHFDGDGQAHMVDVSGKAVTDRIAVADCYIKMTTQTLDLVEQGTAKKGDVLGVARLAGIMGAKKCADLIPLCHPLPITKVAVDLVPDASLPGVRITATVKTSGQTGVEMEALTAASTAALTVYDMLKAAEKTMEIGGLRVVLKDGGKSGRFEAPEGSAP.

Residues 75–77 (LCH) and 113–114 (ME) each bind substrate. Residue aspartate 128 is part of the active site.

Belongs to the MoaC family. In terms of assembly, homohexamer; trimer of dimers.

The enzyme catalyses (8S)-3',8-cyclo-7,8-dihydroguanosine 5'-triphosphate = cyclic pyranopterin phosphate + diphosphate. It participates in cofactor biosynthesis; molybdopterin biosynthesis. Catalyzes the conversion of (8S)-3',8-cyclo-7,8-dihydroguanosine 5'-triphosphate to cyclic pyranopterin monophosphate (cPMP). This chain is Cyclic pyranopterin monophosphate synthase, found in Jannaschia sp. (strain CCS1).